A 77-amino-acid chain; its full sequence is Large ribosomal subunit protein uL24c (77 aa).

Belongs to the universal ribosomal protein uL24 family. As to quaternary structure, part of the 50S ribosomal subunit.

The protein localises to the plastid. It localises to the chloroplast. In terms of biological role, one of two assembly initiator proteins, it binds directly to the 5'-end of the 23S rRNA, where it nucleates assembly of the 50S subunit. The polypeptide is Large ribosomal subunit protein uL24c (rpl24) (Trieres chinensis (Marine centric diatom)).